The sequence spans 161 residues: uncharacterized protein (161 aa).

The RING-type zinc-finger motif lies at 72-134; sequence CAICLDNLQN…EAQQTCPTCR (63 aa). The tract at residues 140–161 is disordered; the sequence is DKEVEEEERQRNLEELHDSMYG.

This is an uncharacterized protein from Caenorhabditis elegans.